The primary structure comprises 252 residues: Outer membrane protein P1 (252 aa).

The first 23 residues, 1–23 (METTTKLAIGVSALCCLASAAFA), serve as a signal peptide directing secretion.

It belongs to the Coxiella porin P1 (CPP1) (TC 1.B.43) family. May form trimers.

It localises to the cell outer membrane. Able to form a pore in lipid bilayers. This is Outer membrane protein P1 (ompP1) from Coxiella burnetii (strain RSA 493 / Nine Mile phase I).